The chain runs to 296 residues: MGKGRAPCCDKNKVKRGPWSPQEDLTLITFIQKHGHQNWRSLPKLAGLLRCGKSCRLRWINYLRPDVKRGNFSKKEEDAIIHYHQTLGNKWSKIASFLPGRTDNEIKNVWNTHLKKRLTPSSSSSSLSSTHDQSTKADHDKNCDGAQEEIHSGLNESQNSATSSHHQGECMHTKPELHEVNGLNEIQFLLDHDDFDDITSEFLQDNDILFPLDSLLHNHQTHISTQEMTREVTKSQSFDHPQPDIPCGFEDTNEESDLRRQLVESTTPNNEYDEWFNFIDNQTYFDDFNFVGEVCL.

2 consecutive HTH myb-type domains span residues 11–63 (KNKV…INYL) and 64–118 (RPDV…KKRL). DNA-binding regions (H-T-H motif) lie at residues 39–63 (WRSL…INYL) and 91–114 (WSKI…NTHL). Positions 118–144 (LTPSSSSSSLSSTHDQSTKADHDKNCD) are disordered. The span at 133–144 (QSTKADHDKNCD) shows a compositional bias: basic and acidic residues.

Interacts with EIL3.

Its subcellular location is the nucleus. Functionally, involved in metal ions homeostasis, including iron ions (Fe) acquisition, via the regulation of NAS4 and NAS2 genes expression. Necessary for plant survival in alkaline soil where iron availability is greatly restricted. Involved in the up-regulation of several biosynthesis genes of secondary metabolites involved in iron uptake under conditions of iron deficiency. Triggers tolerance to nickel (Ni) and zinc (Zn) ions. Required in the roots during early signaling steps of rhizobacteria-mediated (e.g. P.fluorescens WCS417r) and beneficial fungi-mediated (e.g. T.asperellum T34) broad-spectrum induced systemic resistance (ISR) against several pathogens (e.g. P.syringae pv tomato, H.parasitica, P.cucumerina, A.brassicicola and B.cinerea) and implying enhanced callose deposition. Required for the induction of some genes (e.g. BGLU42) upon rhizobacteria-mediated ISR. This is Transcription factor MYB72 from Arabidopsis thaliana (Mouse-ear cress).